Consider the following 233-residue polypeptide: Cell surface glycoprotein gp42 (233 aa).

The signal sequence occupies residues 1-16 (MLLWMVLLLCVSMTEA). Ig-like domains are found at residues 23-98 (PVLS…GTIQ) and 115-195 (PVLT…RDIS). 3 N-linked (GlcNAc...) asparagine glycosylation sites follow: N29, N66, and N181. Disulfide bonds link C40–C88 and C136–C184. A lipid anchor (GPI-anchor amidated glycine) is attached at G206. The propeptide at 207–233 (TASMKSTTVVIWLPVSCLVGWPWLLRF) is removed in mature form.

As to expression, NK cells.

Its subcellular location is the cell membrane. The polypeptide is Cell surface glycoprotein gp42 (Rattus norvegicus (Rat)).